The following is a 213-amino-acid chain: MARLKLRKLEEYLQGVDGFEQPKILLEQYPTPPHIAACMAHHMQSQHEDIEGKLVGDLGCGCGMLSIASTLLGAQLTVGFELDGDAVDTFRGNVVEMELPNVDCVRADVLQLIGSKWEKSFDTVLMNPPFGTKHNAGMDMRFLEVALRLANRAVYSLHKTSTRSYIQKKALEWGARGSVVAELRYNIDASYKFHKQKSKDIEVDFWRFEIGTE.

S-adenosyl-L-methionine contacts are provided by residues Gln28, Thr31, Gly59, Cys62, and 108–109; that span reads DV.

The protein belongs to the methyltransferase superfamily. PrmA family. As to quaternary structure, heterodimer; heterodimerizes with Trmt112. In terms of tissue distribution, enriched in the brain.

It is found in the cytoplasm. It carries out the reaction adenosine in rRNA + S-adenosyl-L-methionine = N(6)-methyladenosine in rRNA + S-adenosyl-L-homocysteine + H(+). Catalytic subunit of a heterodimer with Trmt112, which specifically methylates the 6th position of adenine in 18S rRNA. The sequence is that of rRNA N(6)-adenosine-methyltransferase Mettl5 from Drosophila melanogaster (Fruit fly).